A 264-amino-acid polypeptide reads, in one-letter code: Thymidylate synthase (264 aa).

Residue Arg21 participates in dUMP binding. His51 serves as a coordination point for (6R)-5,10-methylene-5,6,7,8-tetrahydrofolate. A dUMP-binding site is contributed by 126–127; sequence RR. The active-site Nucleophile is Cys146. Residues 166-169, Asn177, and 207-209 each bind dUMP; these read RSAD and HIY. A (6R)-5,10-methylene-5,6,7,8-tetrahydrofolate-binding site is contributed by Asp169. Ala263 is a binding site for (6R)-5,10-methylene-5,6,7,8-tetrahydrofolate.

Belongs to the thymidylate synthase family. Bacterial-type ThyA subfamily. Homodimer.

It localises to the cytoplasm. The catalysed reaction is dUMP + (6R)-5,10-methylene-5,6,7,8-tetrahydrofolate = 7,8-dihydrofolate + dTMP. Its pathway is pyrimidine metabolism; dTTP biosynthesis. Its function is as follows. Catalyzes the reductive methylation of 2'-deoxyuridine-5'-monophosphate (dUMP) to 2'-deoxythymidine-5'-monophosphate (dTMP) while utilizing 5,10-methylenetetrahydrofolate (mTHF) as the methyl donor and reductant in the reaction, yielding dihydrofolate (DHF) as a by-product. This enzymatic reaction provides an intracellular de novo source of dTMP, an essential precursor for DNA biosynthesis. The chain is Thymidylate synthase from Ruminiclostridium cellulolyticum (strain ATCC 35319 / DSM 5812 / JCM 6584 / H10) (Clostridium cellulolyticum).